An 80-amino-acid polypeptide reads, in one-letter code: Cytochrome c oxidase subunit 7A1, mitochondrial (80 aa).

The N-terminal 21 residues, 1 to 21 (MRALRVSQALVRSFSSSTRSH), are a transit peptide targeting the mitochondrion. The Mitochondrial matrix segment spans residues 22–46 (LENRVAEKQKLFQADNDLPVHLKGG). The chain crosses the membrane as a helical span at residues 47–75 (GMDNVLYRLTMTLTLGGTAYCLYCLGWAS). Residues 76–80 (FPHKK) lie on the Mitochondrial intermembrane side of the membrane.

This sequence belongs to the cytochrome c oxidase VIIa family. Component of the complex IV (CIV, cytochrome c oxidase), a multisubunit enzyme composed of 14 subunits. The complex is composed of a catalytic core of 3 subunits MT-CO1, MT-CO2 and MT-CO3, encoded in the mitochondrial DNA, and 11 supernumerary subunits COX4I, COX5A, COX5B, COX6A, COX6B, COX6C, COX7A, COX7B, COX7C, COX8 and NDUFA4, which are encoded in the nuclear genome. The complex exists as a monomer or a dimer and forms supercomplexes (SCs) in the inner mitochondrial membrane with NADH-ubiquinone oxidoreductase (complex I, CI) and ubiquinol-cytochrome c oxidoreductase (cytochrome b-c1 complex, complex III, CIII), resulting in different assemblies (supercomplex SCI(1)III(2)IV(1) and megacomplex MCI(2)III(2)IV(2)).

The protein localises to the mitochondrion inner membrane. Its pathway is energy metabolism; oxidative phosphorylation. Functionally, component of the mitochondrial respiratory complex IV (CIV, also named cytochrome c oxidase complex), the last enzyme in the mitochondrial electron transport chain which drives oxidative phosphorylation. The CIV complex is the component of the respiratory chain that catalyzes the reduction of oxygen to water. Acts as an assembly factor that specifically drives the homodimerization of CIV complexes, mediating the formation of mitochondrial respiratory supercomplexes (respirasomes) containing two CIV: supercomplxes with two molecules of CIV show improved activity. Despite being highly expressed in brown adipose tissue, not required for thermogenesis. The chain is Cytochrome c oxidase subunit 7A1, mitochondrial from Mus musculus (Mouse).